Here is a 540-residue protein sequence, read N- to C-terminus: Beta-2-syntrophin (540 aa).

A disordered region spans residues Leu-73 to Arg-114. Low complexity predominate over residues Asp-81–Gly-92. Positions Pro-93 to Gly-102 are enriched in pro residues. A phosphoserine mark is found at Ser-95, Ser-110, Ser-129, Ser-211, Ser-222, Ser-233, Ser-393, and Ser-395. Over residues Pro-103 to Pro-112 the composition is skewed to low complexity. The PDZ domain maps to Arg-115 to Arg-198. 2 consecutive PH domains span residues Ile-163 to Met-300 and Glu-325 to His-437. Positions Pro-220–Thr-240 are disordered. A compositionally biased stretch (low complexity) spans Ser-222–Ser-231. The 57-residue stretch at Pro-484 to Val-540 folds into the SU domain. Positions Pro-518–Val-540 are calmodulin-binding.

This sequence belongs to the syntrophin family. Monomer and homodimer. Interacts with the other members of the syntrophin family: SNTA1 and SNTB1; and with the sodium channel proteins SCN4A and SCN5A. Interacts with SAST, MAST205, microtubules and microtubule-associated proteins. Interacts with the dystrophin protein DMD and related proteins DTNA and UTRN, and with the neuroregulin receptor ERBB4. Interacts with PTPRN when phosphorylated, protecting PTPRN from protein cleavage by CAPN1. Dephosphorylation upon insulin stimulation disrupts the interaction with PTPRN and results in the cleavage of PTPRN. Interacts with DTNB. In terms of processing, phosphorylated. Partially dephosphorylated upon insulin stimulation. In terms of tissue distribution, ubiquitous. Isoform 1 is the predominant isoform. Weak level of isoform 2 is present in all tested tissues, except in liver and heart where it is highly expressed.

It localises to the membrane. The protein resides in the cytoplasmic vesicle. It is found in the secretory vesicle membrane. The protein localises to the cell junction. Its subcellular location is the cytoplasm. It localises to the cytoskeleton. Adapter protein that binds to and probably organizes the subcellular localization of a variety of membrane proteins. May link various receptors to the actin cytoskeleton and the dystrophin glycoprotein complex. May play a role in the regulation of secretory granules via its interaction with PTPRN. This Homo sapiens (Human) protein is Beta-2-syntrophin (SNTB2).